Here is a 454-residue protein sequence, read N- to C-terminus: Transmembrane protease serine 3 (454 aa).

At 1–48 the chain is on the cytoplasmic side; that stretch reads MGENDPPAVEAPFSFRSLFGLDDLKISPVAPDADAVAAQILSLLPLKF. Residues 49–69 form a helical; Signal-anchor for type II membrane protein membrane-spanning segment; the sequence is FPIIVIGIIALILALAIGLGI. Residues 70 to 454 are Extracellular-facing; that stretch reads HFDCSGKYRC…HEQMERDLKT (385 aa). The region spanning 72 to 108 is the LDL-receptor class A domain; that stretch reads DCSGKYRCRSSFKCIELIARCDGVSDCKDGEDEYRCV. Disulfide bonds link cysteine 73–cysteine 85, cysteine 79–cysteine 98, cysteine 92–cysteine 107, cysteine 129–cysteine 194, cysteine 142–cysteine 204, cysteine 207–cysteine 324, cysteine 242–cysteine 258, cysteine 338–cysteine 407, cysteine 370–cysteine 386, and cysteine 397–cysteine 425. The SRCR domain occupies 109–205; that stretch reads RVGGQNAVLQ…SGHVVTLQCT (97 aa). The Peptidase S1 domain maps to 217–449; the sequence is IVGGNMSLLS…FLDWIHEQME (233 aa). The N-linked (GlcNAc...) asparagine glycan is linked to asparagine 221. Catalysis depends on charge relay system residues histidine 257 and aspartate 304. The Charge relay system role is filled by serine 401.

Belongs to the peptidase S1 family. Post-translationally, undergoes autoproteolytic activation. As to expression, expressed in many tissues including fetal cochlea. Isoform T is found at increased levels in some carcinomas.

The protein resides in the endoplasmic reticulum membrane. Probable serine protease that plays a role in hearing. Acts as a permissive factor for cochlear hair cell survival and activation at the onset of hearing and is required for saccular hair cell survival. Activates ENaC (in vitro). In Homo sapiens (Human), this protein is Transmembrane protease serine 3 (TMPRSS3).